Here is a 930-residue protein sequence, read N- to C-terminus: Translation initiation factor IF-2 (930 aa).

The span at phenylalanine 50–valine 67 shows a compositional bias: low complexity. Disordered regions lie at residues phenylalanine 50 to aspartate 195 and glutamate 260 to proline 346. Composition is skewed to basic and acidic residues over residues serine 68–proline 90 and phenylalanine 110–arginine 125. The span at lysine 129 to arginine 141 shows a compositional bias: low complexity. Composition is skewed to basic and acidic residues over residues arginine 157–lysine 167 and valine 262–arginine 295. Low complexity predominate over residues asparagine 309–asparagine 318. The span at valine 337–proline 346 shows a compositional bias: basic and acidic residues. The region spanning glutamate 432–glutamate 599 is the tr-type G domain. Positions glycine 441–threonine 448 are G1. Glycine 441–threonine 448 contributes to the GTP binding site. Positions glycine 466–histidine 470 are G2. Residues aspartate 487–glycine 490 form a G3 region. Residues aspartate 487 to histidine 491 and asparagine 541 to aspartate 544 each bind GTP. Positions asparagine 541–aspartate 544 are G4. The tract at residues serine 577 to lysine 579 is G5.

The protein belongs to the TRAFAC class translation factor GTPase superfamily. Classic translation factor GTPase family. IF-2 subfamily.

It is found in the cytoplasm. Its function is as follows. One of the essential components for the initiation of protein synthesis. Protects formylmethionyl-tRNA from spontaneous hydrolysis and promotes its binding to the 30S ribosomal subunits. Also involved in the hydrolysis of GTP during the formation of the 70S ribosomal complex. This Streptococcus pneumoniae (strain Hungary19A-6) protein is Translation initiation factor IF-2.